The primary structure comprises 181 residues: Adenine phosphoribosyltransferase (181 aa).

It belongs to the purine/pyrimidine phosphoribosyltransferase family. In terms of assembly, homodimer.

The protein resides in the cytoplasm. It carries out the reaction AMP + diphosphate = 5-phospho-alpha-D-ribose 1-diphosphate + adenine. It participates in purine metabolism; AMP biosynthesis via salvage pathway; AMP from adenine: step 1/1. Its function is as follows. Catalyzes a salvage reaction resulting in the formation of AMP, that is energically less costly than de novo synthesis. The protein is Adenine phosphoribosyltransferase of Brucella abortus (strain S19).